A 475-amino-acid chain; its full sequence is Sulfate adenylyltransferase subunit 1 (475 aa).

One can recognise a tr-type G domain in the interval 25-239; that stretch reads KSLLRFLTCG…EVLETVEIQR (215 aa). Residues 34 to 41 are G1; it reads GSVDDGKS. A GTP-binding site is contributed by 34–41; the sequence is GSVDDGKS. The segment at 92 to 96 is G2; that stretch reads GITID. A G3 region spans residues 113-116; that stretch reads DTPG. GTP contacts are provided by residues 113–117 and 168–171; these read DTPGH and NKMD. Positions 168-171 are G4; that stretch reads NKMD. The tract at residues 206–208 is G5; that stretch reads SAL.

It belongs to the TRAFAC class translation factor GTPase superfamily. Classic translation factor GTPase family. CysN/NodQ subfamily. In terms of assembly, heterodimer composed of CysD, the smaller subunit, and CysN.

It catalyses the reaction sulfate + ATP + H(+) = adenosine 5'-phosphosulfate + diphosphate. It functions in the pathway sulfur metabolism; hydrogen sulfide biosynthesis; sulfite from sulfate: step 1/3. Its function is as follows. With CysD forms the ATP sulfurylase (ATPS) that catalyzes the adenylation of sulfate producing adenosine 5'-phosphosulfate (APS) and diphosphate, the first enzymatic step in sulfur assimilation pathway. APS synthesis involves the formation of a high-energy phosphoric-sulfuric acid anhydride bond driven by GTP hydrolysis by CysN coupled to ATP hydrolysis by CysD. The chain is Sulfate adenylyltransferase subunit 1 from Escherichia coli (strain 55989 / EAEC).